The primary structure comprises 328 residues: Cell division protein ZipA (328 aa).

Topologically, residues 1–4 (MDLN) are periplasmic. The chain crosses the membrane as a helical span at residues 5-25 (TILIIVGIVALVALIVHGLWS). Topologically, residues 26–328 (NRREKSKYFD…NAEQAYLARV (303 aa)) are cytoplasmic. The interval 43-82 (TSLTSRSHTQEEMAQPNNISPNTYVENGHTPIPQPTTEKV) is disordered. Over residues 57-67 (QPNNISPNTYV) the composition is skewed to polar residues.

Belongs to the ZipA family. Interacts with FtsZ via their C-terminal domains.

The protein localises to the cell inner membrane. In terms of biological role, essential cell division protein that stabilizes the FtsZ protofilaments by cross-linking them and that serves as a cytoplasmic membrane anchor for the Z ring. Also required for the recruitment to the septal ring of downstream cell division proteins. The protein is Cell division protein ZipA of Haemophilus influenzae (strain PittEE).